The following is a 304-amino-acid chain: MPHVSLQNVTKLFGEDTIALDDVSIEITAGEFVVILGPSGAGKSTLLRILNGLTEPTTGTAQIGGSPVSESGSDVGMVFQMHYLIESLSAYRNALTGALSRTTNLKSILTLNQTDDKRAALRALDTVGLLKDAEQRAGTMSGGQKQRVGIARALVQNPSLLLADEPVSSLDPKAARDVMRYMKQAARERELTTVASLHQVNIAREFGDRFIGVRDGTVIFDGSRAELSMDVIDDLYYAGSESTPVSHGDIEGQGEGLTKPDDTSVSSDMETTSGRDHSTGTDTGTDTGTDTETDTETDTGEAQL.

Residues 4–240 (VSLQNVTKLF…VIDDLYYAGS (237 aa)) enclose the ABC transporter domain. 37–44 (GPSGAGKS) serves as a coordination point for ATP. The tract at residues 240–304 (SESTPVSHGD…TETDTGEAQL (65 aa)) is disordered. Residues 263 to 272 (TSVSSDMETT) show a composition bias toward polar residues. Over residues 289–304 (TDTETDTETDTGEAQL) the composition is skewed to acidic residues.

It belongs to the ABC transporter superfamily. Phosphonates importer (TC 3.A.1.9.1) family. The complex is composed of two ATP-binding proteins (PhnC), two transmembrane proteins (PhnE) and a solute-binding protein (PhnD).

Its subcellular location is the cell membrane. The enzyme catalyses phosphonate(out) + ATP + H2O = phosphonate(in) + ADP + phosphate + H(+). Part of the ABC transporter complex PhnCDE involved in phosphonates import. Responsible for energy coupling to the transport system. This is Phosphonates import ATP-binding protein PhnC 1 from Haloquadratum walsbyi (strain DSM 16790 / HBSQ001).